A 563-amino-acid polypeptide reads, in one-letter code: Membrane protein insertase YidC (563 aa).

The chain crosses the membrane as a helical span at residues 6 to 26 (TILWMIFSFSLLLLWNNWQIH). The tract at residues 36–68 (PPASSAASPAEGQQAAANGQAATPSVPTTPAAA) is disordered. 4 helical membrane passes run 373-393 (WGWA…PLAA), 443-463 (LPMV…LASV), 482-502 (PYFI…KLNP), and 512-532 (VMMI…AGLV).

It belongs to the OXA1/ALB3/YidC family. Type 1 subfamily. Interacts with the Sec translocase complex via SecD. Specifically interacts with transmembrane segments of nascent integral membrane proteins during membrane integration.

Its subcellular location is the cell inner membrane. In terms of biological role, required for the insertion and/or proper folding and/or complex formation of integral membrane proteins into the membrane. Involved in integration of membrane proteins that insert both dependently and independently of the Sec translocase complex, as well as at least some lipoproteins. Aids folding of multispanning membrane proteins. This Bordetella petrii (strain ATCC BAA-461 / DSM 12804 / CCUG 43448) protein is Membrane protein insertase YidC.